The chain runs to 396 residues: MSSKTLAKFLEENLEDLKSKGLYNVIDPLESSNGPIITIGGKEYINLSSNNYLGLATDSRLQEAAIGAIHKYGVGAGAVRTINGTLDLHIKLEETIAKFKHTEAAIAYQSGFNCNMAAISAVMDKNDAILSDELNHASIIDGSRLSKAKIIVYKHSDMEDLRQKAIAAKESGLYNKLMVITDGVFSMDGDVAKLPEIVEIAEELDLMTYVDDAHGSGVLGKGAGTVKHFGLSDKVDFQIGTLSKAIGVIGGYVAGKQNLIDWLKVRSRPFLFSTALTPADAAACMRSIEILMESTELHDRLWENGRYLKQGLKELGFNIGESETPITPCIIGDEVLTQEFSKRLNEEGVYAKSIVFPTVAKGTGRVRNMPTAAHTKEMLDEAILKYEKVGKEMGII.

Residue 111–112 (GF) participates in pyridoxal 5'-phosphate binding. His136 contacts substrate. Pyridoxal 5'-phosphate contacts are provided by residues Ser186, 211-214 (DDAH), and 241-244 (TLSK). At Lys244 the chain carries N6-(pyridoxal phosphate)lysine. Thr358 is a binding site for substrate.

It belongs to the class-II pyridoxal-phosphate-dependent aminotransferase family. As to quaternary structure, homodimer. It depends on pyridoxal 5'-phosphate as a cofactor.

This Bacillus cereus (strain ATCC 14579 / DSM 31 / CCUG 7414 / JCM 2152 / NBRC 15305 / NCIMB 9373 / NCTC 2599 / NRRL B-3711) protein is Putative pyridoxal phosphate-dependent acyltransferase.